A 248-amino-acid chain; its full sequence is Proteasome subunit alpha (248 aa).

This sequence belongs to the peptidase T1A family. As to quaternary structure, the 20S proteasome core is composed of 14 alpha and 14 beta subunits that assemble into four stacked heptameric rings, resulting in a barrel-shaped structure. The two inner rings, each composed of seven catalytic beta subunits, are sandwiched by two outer rings, each composed of seven alpha subunits. The catalytic chamber with the active sites is on the inside of the barrel. Has a gated structure, the ends of the cylinder being occluded by the N-termini of the alpha-subunits. Is capped by the proteasome-associated ATPase, ARC.

The protein resides in the cytoplasm. It functions in the pathway protein degradation; proteasomal Pup-dependent pathway. The formation of the proteasomal ATPase ARC-20S proteasome complex, likely via the docking of the C-termini of ARC into the intersubunit pockets in the alpha-rings, may trigger opening of the gate for substrate entry. Interconversion between the open-gate and close-gate conformations leads to a dynamic regulation of the 20S proteasome proteolysis activity. Functionally, component of the proteasome core, a large protease complex with broad specificity involved in protein degradation. This is Proteasome subunit alpha from Mycobacterium bovis (strain BCG / Pasteur 1173P2).